Consider the following 1299-residue polypeptide: DNA-directed RNA polymerase subunit beta' (1299 aa).

Positions 60, 62, 75, and 78 each coordinate Zn(2+). Positions 385-405 (GRRGRPVTGPGNRPLKSLSDM) are disordered. Mg(2+) contacts are provided by Asp535, Asp537, and Asp539. Residues Cys886, Cys962, Cys969, and Cys972 each coordinate Zn(2+).

It belongs to the RNA polymerase beta' chain family. The RNAP catalytic core consists of 2 alpha, 1 beta, 1 beta' and 1 omega subunit. When a sigma factor is associated with the core the holoenzyme is formed, which can initiate transcription. Requires Mg(2+) as cofactor. Zn(2+) is required as a cofactor.

It carries out the reaction RNA(n) + a ribonucleoside 5'-triphosphate = RNA(n+1) + diphosphate. Its function is as follows. DNA-dependent RNA polymerase catalyzes the transcription of DNA into RNA using the four ribonucleoside triphosphates as substrates. In Streptomyces avermitilis (strain ATCC 31267 / DSM 46492 / JCM 5070 / NBRC 14893 / NCIMB 12804 / NRRL 8165 / MA-4680), this protein is DNA-directed RNA polymerase subunit beta'.